Consider the following 538-residue polypeptide: DALR anticodon-binding domain-containing protein 3 (538 aa).

In terms of assembly, part of a complex containing tRNA(Arg) and METTL2. Interacts with tRNA(Arg)(CCU) and tRNA(Arg)(UCU). Interacts with METTL2.

Its function is as follows. Involved in tRNA methylation. Facilitates the recognition and targeting of tRNA(Arg)(CCU) and tRNA(Arg)(UCU) substrates for N(3)-methylcytidine modification by METTL2. This chain is DALR anticodon-binding domain-containing protein 3 (Dalrd3), found in Mus musculus (Mouse).